Reading from the N-terminus, the 60-residue chain is Potassium channel toxin Tst-beta-KTx (60 aa).

The region spanning Gln26–Asp60 is the BetaSPN-type CS-alpha/beta domain. 3 disulfides stabilise this stretch: Cys29–Cys50, Cys36–Cys55, and Cys40–Cys57.

It belongs to the long chain scorpion toxin family. Class 1 subfamily. As to expression, expressed by the venom gland.

It is found in the secreted. In terms of biological role, inhibits voltage-gated potassium channels Kv1.1/KCNA1, Kv1.2/KCNA2, and Kv1.3/KCNA3. Its function is as follows. Does not induce hemolytic activity, lactate dehydrogenase (LDH) release from mast cells, mast cell degranulation, and antimicrobial effects. In vivo, injection into mice causes moderate edema formation, but induces very weak or no change in nociceptive sensibility. It also reduces mice locomotion, suggesting an increase in anxiety, but causes no alteration in rearing (standing on hind limbs). The protein is Potassium channel toxin Tst-beta-KTx of Tityus stigmurus (Brazilian scorpion).